Here is a 94-residue protein sequence, read N- to C-terminus: UPF0298 protein SEQ_1830 (94 aa).

This sequence belongs to the UPF0298 family.

It is found in the cytoplasm. The protein is UPF0298 protein SEQ_1830 of Streptococcus equi subsp. equi (strain 4047).